A 1572-amino-acid polypeptide reads, in one-letter code: E3 ubiquitin-protein ligase HECW2 (1572 aa).

The residue at position 48 (serine 48) is a Phosphoserine. The C2 domain occupies 167–301 (GAEGMEGGAS…QAIGDQMLSY (135 aa)). Disordered regions lie at residues 341–452 (VNSV…SSFP) and 489–796 (IMFS…PSVR). Over residues 400–410 (TSTSSRTSPPR) the composition is skewed to low complexity. Positions 518–532 (ASTHEAASFEDKPEN) are enriched in basic and acidic residues. Composition is skewed to polar residues over residues 572–588 (EVDQPTSGADTGTSDAS), 597–614 (ETESLDQGSEPSQVSSET), 643–664 (SSCNESVTTQLSSVDTRCSSLE), and 688–703 (PTSSGPAEGSQESVCT). Positions 737–1068 (WQRRGSLEGA…PRPSSTFNTV (332 aa)) are interaction with TP73. Over residues 744 to 776 (EGAAAAAESPPQEEGSAGEAQGTCEGATAQEEG) the composition is skewed to low complexity. The WW 1 domain maps to 807–840 (EALPPNWEARIDSHGRIFYVDHVNRTTTWQRPTA). Residues 847-874 (LQRSNSIQQMEQLNRRYQSIRRTMTNER) adopt a coiled-coil conformation. Serine 852 and serine 909 each carry phosphoserine. In terms of domain architecture, WW 2 spans 985 to 1018 (LELPRGWEMKHDHQGKAFFVDHNSRTTTFIDPRL). 2 disordered regions span residues 1024–1069 (RPTS…NTVS) and 1161–1187 (CQSPRGSPVSSPQNSPGTQRANARAPA). The span at 1031 to 1040 (HRQHLTRQRS) shows a compositional bias: basic residues. Residues 1161-1181 (CQSPRGSPVSSPQNSPGTQRA) are compositionally biased toward polar residues. Serine 1175 carries the phosphoserine modification. In terms of domain architecture, HECT spans 1237–1572 (SRKDLQRNKL…VEETSTFGLE (336 aa)). Catalysis depends on cysteine 1540, which acts as the Glycyl thioester intermediate.

Interacts with TP73. Interacts with FZR1. In terms of processing, ubiquitinated and degraded during mitotic exit by APC/C-Cdh1. In terms of tissue distribution, predominantly expressed in adult brain, lung and heart.

Its subcellular location is the cytoplasm. The protein resides in the cytoskeleton. It is found in the spindle. It carries out the reaction S-ubiquitinyl-[E2 ubiquitin-conjugating enzyme]-L-cysteine + [acceptor protein]-L-lysine = [E2 ubiquitin-conjugating enzyme]-L-cysteine + N(6)-ubiquitinyl-[acceptor protein]-L-lysine.. It functions in the pathway protein modification; protein ubiquitination. Its function is as follows. E3 ubiquitin-protein ligase that mediates ubiquitination of TP73. Acts to stabilize TP73 and enhance activation of transcription by TP73. Involved in the regulation of mitotic metaphase/anaphase transition. The chain is E3 ubiquitin-protein ligase HECW2 (HECW2) from Homo sapiens (Human).